The chain runs to 719 residues: Leucine-rich repeat and fibronectin type-III domain-containing protein 5 (719 aa).

Residues 1-17 form the signal peptide; the sequence is MEKFLFYLFLIGIAVRA. The region spanning 18–51 is the LRRNT domain; it reads QICPKRCVCQILSPNLATLCAKKGLLFVPPNIDR. Residues 18 to 529 lie on the Extracellular side of the membrane; that stretch reads QICPKRCVCQ…MQSQFLGGTM (512 aa). LRR repeat units follow at residues 52–73, 76–97, 100–121, 124–145, 148–169, 172–193, and 196–217; these read RTVE…DFAN, SLVD…AFAD, NLRA…MFSG, NLHH…AFDD, ALEE…AVEK, SLHT…TFSH, and KMTR…PLFQ. Asn73 carries N-linked (GlcNAc...) asparagine glycosylation. In terms of domain architecture, LRRCT spans 240 to 286; the sequence is NPLHCNCELLWLRRLSREDDLETCASPALLTGRYFWSIPEEEFLCEP. The region spanning 287-373 is the Ig-like domain; that stretch reads PLITRHTHEM…GEATQTVDLH (87 aa). Cys308 and Cys357 form a disulfide bridge. N-linked (GlcNAc...) asparagine glycosylation is found at Asn330, Asn339, Asn382, Asn406, and Asn452. The disordered stretch occupies residues 385–416; it reads NHIHEPDPGSSDISTSTKSGSNASSSNGDTKM. Low complexity predominate over residues 393–412; sequence GSSDISTSTKSGSNASSSNG. In terms of domain architecture, Fibronectin type-III spans 414–503; the sequence is TKMSQDKIVV…ITSLTATRVV (90 aa). The helical transmembrane segment at 530–550 threads the bilayer; it reads IIIIGGIIVASVLVFIIILMI. The Cytoplasmic segment spans residues 551 to 719; the sequence is RYKVCNNNGQ…VQETQRLESI (169 aa). Over residues 614–627 the composition is skewed to low complexity; the sequence is SETCSSQDSSTTTS. Positions 614–719 are disordered; sequence SETCSSQDSS…VQETQRLESI (106 aa). Composition is skewed to polar residues over residues 628–641, 654–677, and 702–713; these read ALPP…PVSQ, EPQS…TALQ, and LLTNVDQNVQET.

The protein belongs to the LRFN family. Can form heteromeric complexes with LRFN1, LRFN2, LRFN3 and LFRN4. Able to form homomeric complexes across cell junctions, between adjacent cells. Does not interact with DLG1, DLG2 or DLG3. Does not interact with DLG4. In terms of processing, glycosylated. In terms of tissue distribution, predominantly expressed in the brain, with a weak, but broad expression in the cerebral cortex and diencephalic nuclei. Strongly expressed in both the pyramidal layer and the dentate gyrus of the hippocampus. Also detected in other parts of the central nervous system, including the olfactory bulb, pons, cerebellum, and medulla oblongata, as well as in the peripheral nervous system, such as the ganglia of cranial nerves and the dorsal root ganglion during gestation.

The protein resides in the membrane. Cell adhesion molecule that mediates homophilic cell-cell adhesion in a Ca(2+)-independent manner. Promotes neurite outgrowth in hippocampal neurons. The protein is Leucine-rich repeat and fibronectin type-III domain-containing protein 5 (Lrfn5) of Mus musculus (Mouse).